A 478-amino-acid polypeptide reads, in one-letter code: Ribulose bisphosphate carboxylase large chain (478 aa).

The propeptide occupies 1–2 (MS). Proline 3 carries the post-translational modification N-acetylproline. The residue at position 14 (lysine 14) is an N6,N6,N6-trimethyllysine. Asparagine 123 and threonine 173 together coordinate substrate. The active-site Proton acceptor is lysine 175. Lysine 177 serves as a coordination point for substrate. 3 residues coordinate Mg(2+): lysine 201, aspartate 203, and glutamate 204. An N6-carboxylysine modification is found at lysine 201. The Proton acceptor role is filled by histidine 294. The substrate site is built by arginine 295, histidine 327, and serine 379.

This sequence belongs to the RuBisCO large chain family. Type I subfamily. Heterohexadecamer of 8 large chains and 8 small chains; disulfide-linked. The disulfide link is formed within the large subunit homodimers. Mg(2+) is required as a cofactor. Post-translationally, the disulfide bond which can form in the large chain dimeric partners within the hexadecamer appears to be associated with oxidative stress and protein turnover.

It is found in the plastid. The protein localises to the chloroplast. It catalyses the reaction 2 (2R)-3-phosphoglycerate + 2 H(+) = D-ribulose 1,5-bisphosphate + CO2 + H2O. The catalysed reaction is D-ribulose 1,5-bisphosphate + O2 = 2-phosphoglycolate + (2R)-3-phosphoglycerate + 2 H(+). Its function is as follows. RuBisCO catalyzes two reactions: the carboxylation of D-ribulose 1,5-bisphosphate, the primary event in carbon dioxide fixation, as well as the oxidative fragmentation of the pentose substrate in the photorespiration process. Both reactions occur simultaneously and in competition at the same active site. In Neurachne tenuifolia, this protein is Ribulose bisphosphate carboxylase large chain.